The chain runs to 92 residues: UPF0223 protein SPCG_1392 (92 aa).

The protein belongs to the UPF0223 family.

The chain is UPF0223 protein SPCG_1392 from Streptococcus pneumoniae (strain CGSP14).